Here is a 337-residue protein sequence, read N- to C-terminus: 2-oxoglutarate-dependent dioxygenase 19 (337 aa).

Residues 1 to 25 (MVAPSRLPSHEEQSAAAAADGSATP) are disordered. The Fe2OG dioxygenase domain maps to 179-283 (NLESCFQILV…RMSFVSLIGP (105 aa)). Fe cation-binding residues include His-208, Asp-210, and His-264. Arg-274 provides a ligand contact to 2-oxoglutarate.

This sequence belongs to the iron/ascorbate-dependent oxidoreductase family. The cofactor is Fe(2+). Requires L-ascorbate as cofactor. Expressed in shoots.

Its subcellular location is the cytoplasm. The enzyme catalyses melatonin + 2-oxoglutarate + O2 = 2-hydroxymelatonin + succinate + CO2. In terms of biological role, involved in melatonin degradation. Catalyzes the hydroxylation of melatonin to produce 2-hydroxymelatonin. This is 2-oxoglutarate-dependent dioxygenase 19 from Oryza sativa subsp. japonica (Rice).